Reading from the N-terminus, the 742-residue chain is Glucosylceramidase (742 aa).

2 N-linked (GlcNAc...) asparagine glycosylation sites follow: N37 and N160. Catalysis depends on E258, which acts as the Proton donor. The N-linked (GlcNAc...) asparagine glycan is linked to N388. E492 (nucleophile) is an active-site residue. 3 N-linked (GlcNAc...) asparagine glycosylation sites follow: N552, N560, and N698. The chain crosses the membrane as a helical span at residues I701–A721.

This sequence belongs to the glycosyl hydrolase 5 (cellulase A) family.

The protein resides in the membrane. The enzyme catalyses a beta-D-glucosyl-(1&lt;-&gt;1')-N-acylsphing-4-enine + H2O = an N-acylsphing-4-enine + D-glucose. Its function is as follows. Specifically hydrolyzes the glucosidic linkage in glucosylceramide. May prevent accumulation of aberrent glucosylceramide containing immature ceramide. The sequence is that of Glucosylceramidase from Cryptococcus neoformans var. grubii serotype A (strain H99 / ATCC 208821 / CBS 10515 / FGSC 9487) (Filobasidiella neoformans var. grubii).